The sequence spans 550 residues: Calcyphosin-2 (550 aa).

2 disordered regions span residues 1 to 20 and 175 to 198; these read MVPP…DNFS and ISDP…DSER. The span at 181–190 shows a compositional bias: polar residues; it reads DLNTKNQESS. 3 EF-hand domains span residues 379 to 414, 415 to 452, and 453 to 488; these read RILT…FHLE, VSEQ…EMNE, and YRKS…KKHP. Ca(2+) is bound by residues aspartate 466, asparagine 468, threonine 470, and aspartate 477.

In Mus musculus (Mouse), this protein is Calcyphosin-2 (Caps2).